The chain runs to 712 residues: Patatin-like phospholipase domain-containing protein NFIA_019760 (712 aa).

Residues 1 to 13 show a composition bias toward basic and acidic residues; sequence MTSDEKSATRDIY. A disordered region spans residues 1–21; that stretch reads MTSDEKSATRDIYDPNTLPDY. Residues 85–105 form a helical membrane-spanning segment; that stretch reads WPFLFTVFAWITVLGFAYTLT. The region spanning 275-466 is the PNPLA domain; it reads LCLSGGATFA…RTDIPIKALN (192 aa). The short motif at 306–310 is the GXSXG element; the sequence is GTSGG. Ser-308 acts as the Nucleophile in catalysis. Residue Asp-453 is the Proton acceptor of the active site. Positions 628–687 are disordered; it reads RRRQDRAEEHADRMVERLDQSFPERQSDYKDESHYTEVSDSLSATSSRPHTPDARRSSMF. Composition is skewed to basic and acidic residues over residues 632–646 and 652–664; these read DRAE…ERLD and RQSD…HYTE. Residues 665–676 show a composition bias toward polar residues; sequence VSDSLSATSSRP. Positions 677-687 are enriched in basic and acidic residues; it reads HTPDARRSSMF.

This sequence belongs to the PLPL family.

It localises to the membrane. Functionally, probable lipid hydrolase. This is Patatin-like phospholipase domain-containing protein NFIA_019760 from Neosartorya fischeri (strain ATCC 1020 / DSM 3700 / CBS 544.65 / FGSC A1164 / JCM 1740 / NRRL 181 / WB 181) (Aspergillus fischerianus).